The chain runs to 556 residues: 2-isopropylmalate synthase (556 aa).

One can recognise a Pyruvate carboxyltransferase domain in the interval 33–307 (PIWLSTDLRD…DPQLDFSDID (275 aa)). Positions 42, 246, 248, and 282 each coordinate Mg(2+). Positions 439 to 556 (ASAPYALKGH…ALSQAESRAA (118 aa)) are regulatory domain.

Belongs to the alpha-IPM synthase/homocitrate synthase family. LeuA type 2 subfamily. As to quaternary structure, homodimer. Mg(2+) is required as a cofactor.

It is found in the cytoplasm. It carries out the reaction 3-methyl-2-oxobutanoate + acetyl-CoA + H2O = (2S)-2-isopropylmalate + CoA + H(+). The protein operates within amino-acid biosynthesis; L-leucine biosynthesis; L-leucine from 3-methyl-2-oxobutanoate: step 1/4. Functionally, catalyzes the condensation of the acetyl group of acetyl-CoA with 3-methyl-2-oxobutanoate (2-ketoisovalerate) to form 3-carboxy-3-hydroxy-4-methylpentanoate (2-isopropylmalate). The polypeptide is 2-isopropylmalate synthase (Ectopseudomonas mendocina (strain ymp) (Pseudomonas mendocina)).